The following is a 635-amino-acid chain: Chaperone protein DnaK (635 aa).

A Phosphothreonine; by autocatalysis modification is found at Thr-198. The tract at residues 597–635 (LYEQDQANNERHDTPETEKAEGDNVVDAEFQEIDDQDKK) is disordered. Positions 604 to 618 (NNERHDTPETEKAEG) are enriched in basic and acidic residues. Residues 620-635 (NVVDAEFQEIDDQDKK) show a composition bias toward acidic residues.

It belongs to the heat shock protein 70 family.

Its function is as follows. Acts as a chaperone. The chain is Chaperone protein DnaK from Zymomonas mobilis subsp. mobilis (strain ATCC 31821 / ZM4 / CP4).